The following is a 61-amino-acid chain: Large ribosomal subunit protein bL28A (61 aa).

This sequence belongs to the bacterial ribosomal protein bL28 family.

This chain is Large ribosomal subunit protein bL28A (rpmB1), found in Streptomyces coelicolor (strain ATCC BAA-471 / A3(2) / M145).